A 560-amino-acid chain; its full sequence is Alpha-farnesene synthase (560 aa).

The Mg(2+) site is built by Asp-308, Asp-312, and Glu-462. The short motif at 308 to 312 (DDIYD) is the DDXXD motif element.

The protein belongs to the terpene synthase family. Tpsa subfamily. It depends on Mg(2+) as a cofactor. As to expression, expressed in the rind tissues of ripe fruits.

It localises to the cytoplasm. The catalysed reaction is (2E,6E)-farnesyl diphosphate = (3E,6E)-alpha-farnesene + diphosphate. It participates in secondary metabolite biosynthesis; terpenoid biosynthesis. Its function is as follows. Sesquiterpene synthase producing exclusively alpha-farnesene. Associated with the production of sesquiterpenes responsible for the aroma of the fruit. The polypeptide is Alpha-farnesene synthase (Cucumis melo (Muskmelon)).